Consider the following 121-residue polypeptide: Large ribosomal subunit protein uL14 (121 aa).

This sequence belongs to the universal ribosomal protein uL14 family. As to quaternary structure, part of the 50S ribosomal subunit. Forms a cluster with proteins L3 and L19. In the 70S ribosome, L14 and L19 interact and together make contacts with the 16S rRNA in bridges B5 and B8.

In terms of biological role, binds to 23S rRNA. Forms part of two intersubunit bridges in the 70S ribosome. The chain is Large ribosomal subunit protein uL14 from Parasynechococcus marenigrum (strain WH8102).